A 2146-amino-acid chain; its full sequence is MAFWTQLMLLLWKNFMYRRRQPVQLLVELLWPLFLFFILVAVRHSHPPLEHHECHFPNKPLPSAGTVPWLQGLICNVNNTCFPQLTPGEEPGRLSNFNDSLVSRLLADARTVLGGASAHRTLAGLGKLIATLRAARSTAQPQPTKQSPLEPPMLDVAELLTSLLRTESLGLALGQAQEPLHSLLEAAEDLAQELLALRSLVELRALLQRPRGTSGPLELLSEALCSVRGPSSTVGPSLNWYEASDLMELVGQEPESALPDSSLSPACSELIGALDSHPLSRLLWRRLKPLILGKLLFAPDTPFTRKLMAQVNRTFEELTLLRDVREVWEMLGPRIFTFMNDSSNVAMLQRLLQMQDEGRRQPRPGGRDHMEALRSFLDPGSGGYSWQDAHADVGHLVGTLGRVTECLSLDKLEAAPSEAALVSRALQLLAEHRFWAGVVFLGPEDSSDPTEHPTPDLGPGHVRIKIRMDIDVVTRTNKIRDRFWDPGPAADPLTDLRYVWGGFVYLQDLVERAAVRVLSGANPRAGLYLQQMPYPCYVDDVFLRVLSRSLPLFLTLAWIYSVTLTVKAVVREKETRLRDTMRAMGLSRAVLWLGWFLSCLGPFLLSAALLVLVLKLGDILPYSHPGVVFLFLAAFAVATVTQSFLLSAFFSRANLAAACGGLAYFSLYLPYVLCVAWRDRLPAGGRVAASLLSPVAFGFGCESLALLEEQGEGAQWHNVGTRPTADVFSLAQVSGLLLLDAALYGLATWYLEAVCPGQYGIPEPWNFPFRRSYWCGPRPPKSPAPCPTPLDPKVLVEEAPPGLSPGVSVRSLEKRFPGSPQPALRGLSLDFYQGHITAFLGHNGAGKTTTLSILSGLFPPSGGSAFILGHDVRSSMAAIRPHLGVCPQYNVLFDMLTVDEHVWFYGRLKGLSAAVVGPEQDRLLQDVGLVSKQSVQTRHLSGGMQRKLSVAIAFVGGSQVVILDEPTAGVDPASRRGIWELLLKYREGRTLILSTHHLDEAELLGDRVAVVAGGRLCCCGSPLFLRRHLGSGYYLTLVKARLPLTTNEKADTDMEGSVDTRQEKKNGSQGSRVGTPQLLALVQHWVPGARLVEELPHELVLVLPYTGAHDGSFATLFRELDTRLAELRLTGYGISDTSLEEIFLKVVEECAADTDMEDGSCGQHLCTGIAGLDVTLRLKMPPQETALENGEPAGSAPETDQGSGPDAVGRVQGWALTRQQLQALLLKRFLLARRSRRGLFAQIVLPALFVGLALVFSLIVPPFGHYPALRLSPTMYGAQVSFFSEDAPGDPGRARLLEALLQEAGLEEPPVQHSSHRFSAPEVPAEVAKVLASGNWTPESPSPACQCSRPGARRLLPDCPAAAGGPPPPQAVTGSGEVVQNLTGRNLSDFLVKTYPRLVRQGLKTKKWVNEVRYGGFSLGGRDPGLPSGQELGRSVEELWALLSPLPGGALDRVLKNLTAWAHSLDAQDSLKIWFNNKGWHSMVAFVNRASNAILRAHLPPGPARHAHSITTLNHPLNLTKEQLSEGALMASSVDVLVSICVVFAMSFVPASFTLVLIEERVTRAKHLQLMGGLSPTLYWLGNFLWDMCNYLVPACIVVLIFLAFQQRAYVAPANLPALLLLLLLYGWSITPLMYPASFFFSVPSTAYVVLTCINLFIGINGSMATFVLELFSDQKLQEVSRILKQVFLIFPHFCLGRGLIDMVRNQAMADAFERLGDRQFQSPLRWEVVGKNLLAMVIQGPLFLLFTLLLQHRSQLLPQPRVRSLPLLGEEDEDVARERERVVQGATQGDVLVLRNLTKVYRGQRMPAVDRLCLGIPPGECFGLLGVNGAGKTSTFRMVTGDTLASRGEAVLAGHSVAREPSAAHLSMGYCPQSDAIFELLTGREHLELLARLRGVPEAQVAQTAGSGLARLGLSWYADRPAGTYSGGNKRKLATALALVGDPAVVFLDEPTTGMDPSARRFLWNSLLAVVREGRSVMLTSHSMEECEALCSRLAIMVNGRFRCLGSPQHLKGRFAAGHTLTLRVPAARSQPAAAFVAAEFPGAELREAHGGRLRFQLPPGGRCALARVFGELAVHGAEHGVEDFSVSQTMLEEVFLYFSKDQGKDEDTEEQKEAGVGVDPAPGLQHPKRVSQFLDDPSTAETVL.

A helical transmembrane segment spans residues 22–42 (PVQLLVELLWPLFLFFILVAV). Residues 43-549 (RHSHPPLEHH…DVFLRVLSRS (507 aa)) are Extracellular-facing. Residues Cys-75 and Cys-225 are joined by a disulfide bond. Asn-312 is a glycosylation site (N-linked (GlcNAc...) asparagine). 6 helical membrane passes run 550–570 (LPLFLTLAWIYSVTLTVKAVV), 593–613 (LGWFLSCLGPFLLSAALLVLV), 626–646 (GVVFLFLAAFAVATVTQSFLL), 655–675 (LAAACGGLAYFSLYLPYVLCV), 687–707 (VAASLLSPVAFGFGCESLALL), and 727–747 (VFSLAQVSGLLLLDAALYGLA). One can recognise an ABC transporter 1 domain in the interval 807–1038 (VSVRSLEKRF…LGSGYYLTLV (232 aa)). Position 841–848 (841–848 (GHNGAGKT)) interacts with ATP. A helical transmembrane segment spans residues 849-869 (TTLSILSGLFPPSGGSAFILG). A compositionally biased stretch (basic and acidic residues) spans 1048 to 1066 (EKADTDMEGSVDTRQEKKN). Disordered regions lie at residues 1048-1072 (EKADTDMEGSVDTRQEKKNGSQGSR) and 1185-1209 (TALENGEPAGSAPETDQGSGPDAVG). The helical transmembrane segment at 1243–1263 (IVLPALFVGLALVFSLIVPPF) threads the bilayer. Residues 1264-1537 (GHYPALRLSP…ALMASSVDVL (274 aa)) are Extracellular-facing. Cysteines 1345 and 1359 form a disulfide. 6 helical membrane passes run 1538–1558 (VSICVVFAMSFVPASFTLVLI), 1584–1604 (FLWDMCNYLVPACIVVLIFLA), 1621–1641 (LLLLLYGWSITPLMYPASFFF), 1649–1669 (VVLTCINLFIGINGSMATFVL), 1683–1703 (ILKQVFLIFPHFCLGRGLIDM), and 1729–1749 (VVGKNLLAMVIQGPLFLLFTL). The 233-residue stretch at 1793 to 2025 (LVLRNLTKVY…FAAGHTLTLR (233 aa)) folds into the ABC transporter 2 domain. 1827-1834 (GVNGAGKT) serves as a coordination point for ATP. The disordered stretch occupies residues 2104–2146 (QGKDEDTEEQKEAGVGVDPAPGLQHPKRVSQFLDDPSTAETVL).

The protein belongs to the ABC transporter superfamily. ABCA family. N-glycosylated. Expressed in leukocytes (at protein level). Widely expressed. Highly expressed in myelo-lymphatic tissues including peripheral leukocytes, thymus, spleen and bone marrow. Expressed in the hippocampus and the cerebellum. Isoform 2: Abundant in lymph node, spleen, thymus and trachea. Isoform 1: Strongly expressed in brain and bone marrow.

It is found in the cell membrane. The protein resides in the golgi apparatus membrane. Its subcellular location is the early endosome membrane. The protein localises to the cytoplasm. It localises to the cell projection. It is found in the ruffle membrane. The protein resides in the phagocytic cup. Its subcellular location is the endoplasmic reticulum. The catalysed reaction is ATP + H2O + phospholipidSide 1 = ADP + phosphate + phospholipidSide 2.. The enzyme catalyses a 1,2-diacyl-sn-glycero-3-phosphocholine(out) + ATP + H2O = a 1,2-diacyl-sn-glycero-3-phosphocholine(in) + ADP + phosphate + H(+). It carries out the reaction a 1,2-diacyl-sn-glycero-3-phospho-L-serine(out) + ATP + H2O = a 1,2-diacyl-sn-glycero-3-phospho-L-serine(in) + ADP + phosphate + H(+). With respect to regulation, ATPase activity is decreased by cholesterol and ceramide. ATPase activity is stimulated by phosphatidylserine, phosphatidylcholine and sphingomyelin, but phosphatidylserine is more effective. In terms of biological role, catalyzes the translocation of specific phospholipids from the cytoplasmic to the extracellular/lumenal leaflet of membrane coupled to the hydrolysis of ATP. Transports preferentially phosphatidylserine over phosphatidylcholine. Plays a role in lipid homeostasis and macrophage-mediated phagocytosis. Binds APOA1 and may function in apolipoprotein-mediated phospholipid efflux from cells. May also mediate cholesterol efflux. May regulate cellular ceramide homeostasis during keratinocyte differentiation. Involved in lipid raft organization and CD1D localization on thymocytes and antigen-presenting cells, which plays an important role in natural killer T-cell development and activation. Plays a role in phagocytosis of apoptotic cells by macrophages. Macrophage phagocytosis is stimulated by APOA1 or APOA2, probably by stabilization of ABCA7. Also involved in phagocytic clearance of amyloid-beta by microglia cells and macrophages. Further limits amyloid-beta production by playing a role in the regulation of amyloid-beta A4 precursor protein (APP) endocytosis and/or processing. Amyloid-beta is the main component of amyloid plaques found in the brains of Alzheimer patients. This is Phospholipid-transporting ATPase ABCA7 from Homo sapiens (Human).